The sequence spans 204 residues: Putative t-SNARE coiled-coil homology domain-containing protein L657 (204 aa).

T-SNARE coiled-coil homology domains are found at residues 9–71 (SDYY…MDHV) and 140–202 (DNSR…IKHT). The stretch at 159 to 181 (VLEKQANDISNILDEQNNTLEII) forms a coiled coil.

The polypeptide is Putative t-SNARE coiled-coil homology domain-containing protein L657 (Acanthamoeba polyphaga (Amoeba)).